Consider the following 490-residue polypeptide: 5'-3' exonuclease PLD3 (490 aa).

Residues 1–38 (MKPKLMYQELKVPAEEPANELPMNEIEAWKAAEKKARW) are Cytoplasmic-facing. A helical; Signal-anchor for type II membrane protein membrane pass occupies residues 39 to 59 (VLLVLILAVVGFGALMTQLFL). The Lumenal portion of the chain corresponds to 60–490 (WEYGDLHLFG…DSVGNACRLL (431 aa)). 2 cysteine pairs are disulfide-bonded: Cys-77-Cys-239 and Cys-81-Cys-237. 2 N-linked (GlcNAc...) asparagine glycosylation sites follow: Asn-97 and Asn-132. A PLD phosphodiesterase 1 domain is found at 196–223 (THGVLHTKFWVVDQTHFYLGSANMDWRS). Active-site residues include His-201, Lys-203, and Asp-208. His-201 acts as the Proton donor in catalysis. The phosphate site is built by His-201 and Lys-203. Position 218 (Asn-218) interacts with phosphate. 3 N-linked (GlcNAc...) asparagine glycosylation sites follow: Asn-236, Asn-284, and Asn-387. Cys-366 and Cys-487 are oxidised to a cystine. Positions 411–437 (YARVNHNKYMVTERATYIGTSNWSGNY) constitute a PLD phosphodiesterase 2 domain. Residue His-416 participates in phosphate binding. His-416 functions as the Nucleophile in the catalytic mechanism. Residue Phe-438 coordinates Mg(2+).

Belongs to the phospholipase D family. Homodimer. Interacts with APP. In terms of processing, N-glycosylated. Proteolytically processed to a soluble form that is stable within endosomes and lysosomes. During transport through the secretory pathway becomes proteolysed by cysteine proteases, thereby releasing a stable soluble lysosomal lumenal polypeptide, whereas the transmembrane-bound fragment is rapidly degraded. Its transport route to lysosomes involves ubiquitination and the ESCRT complex. Post-translationally, ubiquitinated. Ubiquitination mediates sorting into lysosomes.

It localises to the endoplasmic reticulum membrane. Its subcellular location is the lysosome lumen. The protein resides in the early endosome membrane. The protein localises to the late endosome membrane. It is found in the golgi apparatus membrane. It localises to the endosome membrane. It carries out the reaction Exonucleolytic cleavage in the 5'- to 3'-direction to yield nucleoside 3'-phosphates.. The enzyme catalyses a 5'-end 5'-dephospho-ribonucleotidyl-ribonucleotide-RNA + H2O = a ribonucleoside 3'-phosphate + a 5'-end dephospho-ribonucleoside-RNA + H(+). It catalyses the reaction a ribonucleoside 3'-phosphate-2'-3'-cyclophospho-GMP + H2O = a ribonucleoside 3'-phosphate + 2',3'-cyclophospho-GMP + H(+). The catalysed reaction is a 5'-end 5'-dephospho-2'-deoxyribonucleotidyl-2'-deoxyribonucleotide in single-stranded DNA + H2O = a 5'-end dephospho-2'-deoxyribonucleoside in single-stranded DNA + a 2'-deoxyribonucleoside 3'-phosphate + H(+). It carries out the reaction a 5'-end 5'-phospho-2'-deoxyribonucleotide in single-stranded DNA + H2O = a 5'-end 5'-dephospho-2'-deoxyribonucleotide in single-stranded DNA + phosphate. The enzyme catalyses a 3-lyso-sn-glycero-1-phospho-(3'-acyl-1'-sn-glycerol) + a 1-acyl-sn-glycerol = a 3-acyl-sn-glycero-1-phospho-(3'-acyl-1'-sn-glycerol) + glycerol. It catalyses the reaction 3-lyso-sn-glycero-1-phospho-(3'-(9Z-octadecenoyl)-1'-sn-glycerol) + 1-(9Z-octadecenoyl)-sn-glycerol = 3-(9Z-octadecenoyl)-sn-glycero-1-phospho-(3'-(9Z-octadecenoyl)-1'-sn-glycerol) + glycerol. In terms of biological role, 5'-&gt;3' exonuclease that hydrolyzes the phosphodiester bond of single-stranded DNA (ssDNA) and RNA molecules to form nucleoside 3'-monophosphates and 5'-end 5'-hydroxy deoxyribonucleotide/ribonucleotide fragments. Partially redundant with PLD4, can cleave all four nucleotides displaying higher efficiency for ssDNA and RNA fragments initiated with uridine and guanosine residues and lower efficiency for cytidine-initiated substrates. As a result, it does not always degrade polynucleotides to the single nucleotide level, it can stall at specific sites sparing certain fragments from exonucleolytic degradation. Processes self and pathogenic ssDNA and RNA molecules that reach the endolysosomal compartment via phagocytosis or autophagy and may serve as 'danger' signals for recognition by innate immune receptors such as toll-like receptors (TLRs). Degrades mitochondrial CpG-rich ssDNA fragments to prevent TLR9 activation and autoinflammatory response, but it can cleave viral RNA to generate ligands for TLR7 activation and initiate antiviral immune responses. In plasmacytoid dendritic cells, it cooperates with endonuclease RNASET2 to release 2',3'-cyclic guanosine monophosphate (2',3'-cGMP), a potent stimulatory ligand for TLR7. Produces 2',3'-cGMPs and cytidine-rich RNA fragments that occupy TLR7 ligand-binding pockets and trigger a signaling-competent state. Can exert polynucleotide phosphatase activity toward 5'-phosphorylated ssDNA substrates although at a slow rate. Transphosphatidylase that catalyzes the exchange with R to S stereo-inversion of the glycerol moiety between (S,R)-lysophosphatidylglycerol (LPG) and monoacylglycerol (MAG) substrates to yield (S,S)-bis(monoacylglycero)phosphate (BMP). Can synthesize a variety of (S,S)-BMPs representing the main phospholipid constituent of lysosomal intralumenal vesicle (ILV) membranes that bind acid hydrolases for lipid degradation. Regulates the homeostasis and interorganellar communication of the endolysosomal system with an overall impact on cellular removal of dysfunctional organelles via autophagy as well as proper protein and lipid turnover. May play a role in myotube formation in response to ER stress. The protein is 5'-3' exonuclease PLD3 (PLD3) of Pongo abelii (Sumatran orangutan).